We begin with the raw amino-acid sequence, 401 residues long: Type 3 secretion system translocon protein SctE (401 aa).

Residues 129 to 160 (IQRLHEQNMKKIEENQEKIKETEENAKQVKKS) are a coiled coil. Transmembrane regions (helical) follow at residues 166-186 (IFGW…VASG) and 225-245 (LGPI…VMTF). Residues 345–379 (LALNKADMAALQSIIDRLKEELSHLSESHRQVMEL) adopt a coiled-coil conformation.

It belongs to the SctE/SipB/YopB family. The core secretion machinery of the T3SS is composed of approximately 20 different proteins, including cytoplasmic components, a base, an export apparatus and a needle. This subunit is involved in the formation of a pore, called the translocon, in host membrane. Interacts with YopD/SctB. Together with YopD/SctB, forms a multimeric integral membrane complex with a mass of between 500 and 700 kDa.

The protein resides in the secreted. Its subcellular location is the host membrane. Component of the type III secretion system (T3SS), also called injectisome, which is used to inject bacterial effector proteins into eukaryotic host cells. YopB/SctE and YopD/SctB are inserted into the host membrane where they form a pore and allow the translocation of effector proteins into the cytosol of target cells. Is an essential virulence determinant. Required for YopE translocation. Functionally, essential for the establishment of Yersinia infections in a mouse model system, but not for the targeting of effector Yops. May modulate the host's immune response at a distance from the site of infection. The chain is Type 3 secretion system translocon protein SctE from Yersinia enterocolitica.